The sequence spans 577 residues: MSSTSSDRPYDPLAPENEGVASSDVESTDSGEIRSYGPEEVLKNGSQIKDKGPALSKNSTQTSAVESAVAANRRLSKILTNTVDEPDVLEVDYSKCPPMGGGRPFPPTLPEKTQFEVTFDGPNDPLHPFNWPLRKKVMLCIILCLNCISITMGSSIFATGIRQICEIYHVIPVVAILGITLYVLGFAASPVIYAPLSEIYGRRGVLVISSFGFALFNFAVATAKDLQTIMICRFFAGFIGAAPLAVVPAAFADMFDTNIRGKAICLFSLGVFVGPILAPVIGSYITQHTTWRWLEYVIACFASAIFVAILFFFEESHHPSILVGKAKELRKLTGNWGIHAAHEDVELSVKEIAEKTITRPIIMLFTEPLLLIVTIYNSFVYGILYLLLEAYPIVFEQGYGFHTNGELPYISLIIGMAICGAFIWWMDEDYLRRYRKKGGLVPEARLLPMVVAGIVFPIGILWFCWTGNYPHKIHWIVPTIAGAFTGFGLIGIFLPCLNYIIESYLLIAASAVAANTFMRSGFGAAFPLFAGYMFNGMGVNYAGLLLGLLAVAMIPVPLLFLKYGPGIRKRSKYAYSL.

Positions 1–63 (MSSTSSDRPY…ALSKNSTQTS (63 aa)) are disordered. 2 N-linked (GlcNAc...) asparagine glycosylation sites follow: Asn-44 and Asn-58. A run of 12 helical transmembrane segments spans residues 137-157 (VMLC…SSIF), 167-187 (IYHV…LGFA), 204-224 (GVLV…ATAK), 234-254 (FFAG…FADM), 263-283 (AICL…VIGS), 293-313 (WLEY…LFFF), 368-388 (PLLL…YLLL), 406-426 (ELPY…IWWM), 446-466 (LLPM…FCWT), 475-495 (WIVP…IFLP), 504-526 (YLLI…GAAF), and 541-561 (YAGL…LLFL).

The protein belongs to the major facilitator superfamily. DHA1 family. Polyamines/proton antiporter (TC 2.A.1.2.16) subfamily.

Its subcellular location is the cell membrane. Its function is as follows. Multidrug resistance transporter involved in resistance to azole antifungal drugs such as the imidazoles miconazole, ketoconazole, and tioconazole; as well as the triazoles itraconazole and fluconazole. Also plays a role in the resistance to other antifungal drug families such as the polyene amphotericin B, the pyrimide analog flucytosine, the fungicide mancozeb, and the polyamine spermine. Decreases the intracellular accumulation of clotrimazole by mediating its extrusion from cells. Plays a role in biofilm formation. The sequence is that of Multidrug transporter TPO1_2 from Candida glabrata (strain ATCC 2001 / BCRC 20586 / JCM 3761 / NBRC 0622 / NRRL Y-65 / CBS 138) (Yeast).